The sequence spans 297 residues: Zinc finger protein 784 (297 aa).

The segment covering 1-12 has biased composition (pro residues); it reads MAAARPDPPIPS. A disordered region spans residues 1-39; it reads MAAARPDPPIPSSPTRESPSPEPPDLVLVPDGRPVTPPG. At Ser-13 the chain carries Phosphoserine. 3 consecutive C2H2-type zinc fingers follow at residues 64–86, 100–122, and 128–150; these read FHCA…EHGH, SRCH…YSLH, and YRCS…QHRH. The segment at 149 to 175 is disordered; that stretch reads RHGVEPGTSERLLPTTTTGQPNSRVAQ. The span at 162-173 shows a compositional bias: polar residues; sequence PTTTTGQPNSRV. 3 C2H2-type zinc fingers span residues 195–217, 223–245, and 251–273; these read FACR…ERVH, YHCS…ARIH, and FRCM…QRTH. Residues 268 to 297 form a disordered region; it reads KHQRTHFHGPGSGVGESRGQLRSSSVSQES. Residues 287–297 are compositionally biased toward polar residues; sequence QLRSSSVSQES.

The protein belongs to the krueppel C2H2-type zinc-finger protein family.

It is found in the nucleus. May be involved in transcriptional regulation. The polypeptide is Zinc finger protein 784 (Znf784) (Mus musculus (Mouse)).